We begin with the raw amino-acid sequence, 37 residues long: Large ribosomal subunit protein bL36 (37 aa).

The protein belongs to the bacterial ribosomal protein bL36 family.

The protein is Large ribosomal subunit protein bL36 (rpmJ) of Mycoplasmoides gallisepticum (strain R(low / passage 15 / clone 2)) (Mycoplasma gallisepticum).